The sequence spans 473 residues: MIKEALIVKTTALPQSRIALELEIPSNTCKSFVSETINSISRSAKIPGFRLGKIPKQVLIQRIGINQLYASALEKIIDKSWKEAIEMESIEPLSEPELVDGFESLLKNFNPEKTLKINLQTDVAPTLKLKKSKGLSVEIIKRKFDPKSIDEALEKSRNQLANIIPVINRPARLGDIAVVSFKGIYKDSKKAIDGGSSDSMDLELEKNKMIPGFVEGIVGMKIDDNKTLNLKFPDDYSHEESRGKEAIFEVSLKDLKEKELPELNDDFAKQSGNKDSLKELKKDIEKQLKENFDNTQKNIKIEALMDALSKELDAEIPKAMIDIEVRNNIEQTAQRFAQQGMDIKSTFTPELVKTLAESTRPQAEKNVQRNLALKALSESENITVEDKEINQKMKEYDDEISKSQKQIDIQKLKEVVLNDLLKEKLITWLEENSTVKEISEKVTKSTTKSKTKSKTKKESQAKSEPNKKKKEKK.

One can recognise a PPIase FKBP-type domain in the interval 174–261 (GDIAVVSFKG…LKDLKEKELP (88 aa)). The tract at residues 437–473 (EISEKVTKSTTKSKTKSKTKKESQAKSEPNKKKKEKK) is disordered. Residues 456–466 (KKESQAKSEPN) show a composition bias toward basic and acidic residues.

It belongs to the FKBP-type PPIase family. Tig subfamily.

The protein resides in the cytoplasm. It carries out the reaction [protein]-peptidylproline (omega=180) = [protein]-peptidylproline (omega=0). Its function is as follows. Involved in protein export. Acts as a chaperone by maintaining the newly synthesized protein in an open conformation. Functions as a peptidyl-prolyl cis-trans isomerase. The sequence is that of Trigger factor from Prochlorococcus marinus (strain MIT 9515).